Consider the following 451-residue polypeptide: MLHKNDIIETEISDISHEGMGIAKVDGFVFFVENALPGEIIKMRVLKLRKRIGYGKVEEYLTTSPHRNEGLDYTYLRTGIADLGHLTYEQQLLFKQKQVADNLYKIAHISDVLVEPTLGMTIPLAYRNKAQVPVRRVDGQLETGFFRKNSHTLVSIEDYLIQEKEIDALINFTRDLLRKFDVKPYDEEQQSGLIRNLVVRRGHYTGQLMLVLVTTRPKIFRIDQMIEKLVSAFPSVVSIMQNINDRNSNVIFGKEFRTLYGSDTIEDQMLGNTYAISAQSFYQVNTEMAEKLYQKAIDFSDLNSEDIVIDAYSGIGTIGLSVAKQVKHVYGVEVVEKAVSDAKENATRNGITNSTYVADSAENAMAKWLKEGIKPTVIMVDPPRKGLTESFVYSAAQTKADKITYISCNSATMARDIKLFEELGYHLVKIQPVDLFPMTHHVECVALLVKA.

Residues 1 to 59 form the TRAM domain; sequence MLHKNDIIETEISDISHEGMGIAKVDGFVFFVENALPGEIIKMRVLKLRKRIGYGKVEE. S-adenosyl-L-methionine contacts are provided by glutamine 283, tyrosine 312, glutamate 333, and aspartate 381. Catalysis depends on cysteine 408, which acts as the Nucleophile.

This sequence belongs to the class I-like SAM-binding methyltransferase superfamily. RNA M5U methyltransferase family.

This is an uncharacterized protein from Streptococcus agalactiae serotype V (strain ATCC BAA-611 / 2603 V/R).